A 1175-amino-acid polypeptide reads, in one-letter code: DNA ligase 3 (1175 aa).

The interval 195–243 (HDFDNDNGDGDDGDGDDNDDDDGDGDSDSDKKKKKSSGGSGSDSGSKKK) is disordered. Residues 199–221 (NDNGDGDDGDGDDNDDDDGDGDS) show a composition bias toward acidic residues. E281 is a binding site for ATP. Catalysis depends on K283, which acts as the N6-AMP-lysine intermediate. ATP-binding residues include R288 and R303. Mg(2+) contacts are provided by E334 and E432. 3 residues coordinate ATP: K437, R448, and K452. Disordered stretches follow at residues 612 to 669 (PVGK…LKFV) and 829 to 869 (KSSP…KRGR). Low complexity-rich tracts occupy residues 622–635 (TTTTTTTTTTTTTT) and 829–859 (KSSPTTTSPTTTSPTTTSPKITSPSSSSSPS). Residues 883-976 (PSLPIFEDVN…KLLPLHEDYI (94 aa)) form the BRCT 1 domain. Positions 984 to 1036 (PDYSQSSSSSSMSIEEEKIVVTTTSDDPSEGNQQQQDKKVIKESKIIQSKDHS) are disordered. The span at 987–996 (SQSSSSSSMS) shows a compositional bias: low complexity. The span at 1004–1018 (VTTTSDDPSEGNQQQ) shows a compositional bias: polar residues. Positions 1019–1036 (QDKKVIKESKIIQSKDHS) are enriched in basic and acidic residues. One can recognise a BRCT 2 domain in the interval 1067 to 1174 (HLLSIFQECI…DLLDVKNYKL (108 aa)).

The protein belongs to the ATP-dependent DNA ligase family. Requires Mg(2+) as cofactor.

Its subcellular location is the nucleus. The enzyme catalyses ATP + (deoxyribonucleotide)n-3'-hydroxyl + 5'-phospho-(deoxyribonucleotide)m = (deoxyribonucleotide)n+m + AMP + diphosphate.. In terms of biological role, the alpha isoform interacts with DNA-repair protein XRCC1 and can correct defective DNA strand-break repair and sister chromatid exchange following treatment with ionizing radiation and alkylating agents. The beta isoform does not interact with XRCC1 and may be specifically involved in the completion of homologous recombination events that occur during meiotic prophase. This is DNA ligase 3 (lig3) from Dictyostelium discoideum (Social amoeba).